Reading from the N-terminus, the 315-residue chain is Protoheme IX farnesyltransferase (315 aa).

9 helical membrane passes run 32-52 (VMSL…GHMN), 53-73 (PVLA…SGAL), 93-113 (IPAG…LSAF), 120-140 (LMVN…YAVI), 153-173 (IVIG…AATG), 180-200 (LVLF…LSLF), 226-246 (ALFY…MGFA), 249-269 (FYGV…WRLW), and 295-315 (IFAV…FGVF).

Belongs to the UbiA prenyltransferase family. Protoheme IX farnesyltransferase subfamily.

The protein localises to the cell inner membrane. It carries out the reaction heme b + (2E,6E)-farnesyl diphosphate + H2O = Fe(II)-heme o + diphosphate. Its pathway is porphyrin-containing compound metabolism; heme O biosynthesis; heme O from protoheme: step 1/1. Converts heme B (protoheme IX) to heme O by substitution of the vinyl group on carbon 2 of heme B porphyrin ring with a hydroxyethyl farnesyl side group. The protein is Protoheme IX farnesyltransferase of Brucella canis (strain ATCC 23365 / NCTC 10854 / RM-666).